Consider the following 267-residue polypeptide: U6 snRNA phosphodiesterase 1 (267 aa).

The disordered stretch occupies residues 1–72 (MNAAPLVGYS…EDDSARHGGR (72 aa)). The active-site Proton acceptor is the His122. Residue 122–124 (HLS) coordinates AMP. UMP is bound by residues Gln166, Tyr204, and 208–212 (SFHVS). AMP contacts are provided by residues Tyr204 and 206 to 212 (DPSFHVS). His210 (proton donor) is an active-site residue.

It belongs to the 2H phosphoesterase superfamily. USB1 family. As to quaternary structure, interacts with PLRG1, CDC5L and PRPF19.

The protein localises to the nucleus. It catalyses the reaction a 3'-end uridylyl-uridine-RNA = a 3'-end 2',3'-cyclophospho-uridine-RNA + uridine. The catalysed reaction is a 3'-end uridylyl-adenosine-RNA = a 3'-end 2',3'-cyclophospho-uridine-RNA + adenosine. Its function is as follows. 3'-5' RNA exonuclease that trims the 3' end of oligo(U) and oligo(A) tracts of the pre-U6 small nuclear RNA (snRNA) molecule, leading to the formation of a mature U6 snRNA 3' end-terminated with a 2',3'-cyclic phosphate. Participates in the U6 snRNA 3' end processing that prevents U6 snRNA degradation. In addition also removes uridines from the 3' end of U6atac snRNA and possibly the vault RNA VTRNA1-1. This is U6 snRNA phosphodiesterase 1 from Rattus norvegicus (Rat).